The following is a 201-amino-acid chain: Recombination protein RecR (201 aa).

Residues 58 to 73 (CPECGLLTEEERCGLC) form a C4-type zinc finger. The region spanning 81–176 (TLLCVVESSA…RTTRIAHGVP (96 aa)) is the Toprim domain.

Belongs to the RecR family.

Functionally, may play a role in DNA repair. It seems to be involved in an RecBC-independent recombinational process of DNA repair. It may act with RecF and RecO. In Halorhodospira halophila (strain DSM 244 / SL1) (Ectothiorhodospira halophila (strain DSM 244 / SL1)), this protein is Recombination protein RecR.